Reading from the N-terminus, the 238-residue chain is MKLRFAGTILREMLPDRWHMTAFAPTSNDRSIKVDGLKTHDNYQLLNRELAADDPWRLDGNPFERKRHAQMLLLSLAQGPIANALEVGCAAGAFTEKLAPHCQRLTVIDVVPEAIDRTRRRMNKPAHISWVVSDVQQFSSEELFDLIVVAEVLYYLGDIAEMRMAVGNLLRMLAPGGHLVFGSARDANCQRWGHVTGAETVIAILTEMLVEVERLELQGDSDNEDCLLVRFRNPVSSS.

Belongs to the NodS family.

Functionally, SAM-utilizing methyltransferase involved in nod factor synthesis. The sequence is that of Nodulation protein S (nodS) from Rhizobium tropici.